Consider the following 595-residue polypeptide: Polyadenylate-binding protein-interacting protein 4 (595 aa).

The 66-residue stretch at 48–113 (RLVYFTTCKI…SRSEFVRKPP (66 aa)) folds into the Sm domain. 2 stretches are compositionally biased toward polar residues: residues 302 to 313 (GGSSTSDGQKPA) and 326 to 346 (GDSQ…TSKQ). Disordered stretches follow at residues 302 to 505 (GGSS…FYYP) and 536 to 595 (MYHP…KGRE). Basic and acidic residues predominate over residues 364–382 (DEQRRKNNEEVSHNNRSAE). Over residues 416-465 (SQVSSKTKSESSFGQSASRSSESRPGPSTSSRPGLSPSSSIGSMASSEKS) the composition is skewed to low complexity. A PAM2-like 1; degenerate motif is present at residues 466–474 (TLNPNAKEF). A PAM2-like 2 motif is present at residues 475-485 (KLNPKAKSFKP). 2 stretches are compositionally biased toward low complexity: residues 488–501 (SAAA…ADAS) and 548–570 (QPQY…PGQQ).

As to expression, expressed in cauline leaves, stems, rosette leaves, immature siliques and primary inflorescences.

The polypeptide is Polyadenylate-binding protein-interacting protein 4 (CID4) (Arabidopsis thaliana (Mouse-ear cress)).